Reading from the N-terminus, the 450-residue chain is UPF0210 protein MK1214 (450 aa).

The protein belongs to the UPF0210 family.

This chain is UPF0210 protein MK1214, found in Methanopyrus kandleri (strain AV19 / DSM 6324 / JCM 9639 / NBRC 100938).